The primary structure comprises 125 residues: Period circadian protein (125 aa).

The interval 1–125 (EGSGGSGSSG…VTLTESLLNK (125 aa)) is disordered. 3 tandem repeats follow at residues 30–31 (GT), 33–34 (GT), and 35–36 (GT). Positions 30 to 84 (GTGGTGTNTGTNTGTGTGTGTGTGTGTGTGTGTGTGTGTGTGTGTGTGKGAGAGT) are enriched in gly residues. The interval 30–86 (GTGGTGTNTGTNTGTGTGTGTGTGTGTGTGTGTGTGTGTGTGTGTGTGKGAGAGTGT) is 28 X 2 AA approximate tandem repeats of G-[TA]. The stretch at 37–38 (NT) is one 4; approximate repeat. Copy 5 of the repeat occupies 39–40 (GT). The 6; approximate repeat unit spans residues 41-42 (NT). Repeat copies occupy residues 43–44 (GT), 45–46 (GT), 47–48 (GT), 49–50 (GT), 51–52 (GT), 53–54 (GT), 55–56 (GT), 57–58 (GT), 59–60 (GT), 61–62 (GT), 63–64 (GT), 65–66 (GT), 67–68 (GT), 69–70 (GT), 71–72 (GT), 73–74 (GT), and 75–76 (GT). A 24; approximate repeat occupies 77 to 78 (GK). 4 consecutive repeat copies span residues 79–80 (GA), 81–82 (GA), 83–84 (GT), and 85–86 (GT). Positions 85 to 112 (GTATNETAGPGTTTTTTTRSTTTAATAA) are enriched in low complexity. Over residues 116–125 (VTLTESLLNK) the composition is skewed to polar residues.

Forms a heterodimer with timeless (TIM); the complex then translocates into the nucleus. In terms of processing, phosphorylated with a circadian rhythmicity, probably by the double-time protein (dbt). Phosphorylation could be implicated in the stability of per monomer and in the formation of heterodimer per-tim.

It localises to the nucleus. The protein localises to the cytoplasm. It is found in the perinuclear region. Essential for biological clock functions. Determines the period length of circadian and ultradian rhythms; an increase in PER dosage leads to shortened circadian rhythms and a decrease leads to lengthened circadian rhythms. Essential for the circadian rhythmicity of locomotor activity, eclosion behavior, and for the rhythmic component of the male courtship song that originates in the thoracic nervous system. The biological cycle depends on the rhythmic formation and nuclear localization of the TIM-PER complex. Light induces the degradation of TIM, which promotes elimination of PER. Nuclear activity of the heterodimer coordinatively regulates PER and TIM transcription through a negative feedback loop. Behaves as a negative element in circadian transcriptional loop. Does not appear to bind DNA, suggesting indirect transcriptional inhibition. The sequence is that of Period circadian protein (per) from Drosophila ananassae (Fruit fly).